A 97-amino-acid chain; its full sequence is Large ribosomal subunit protein bL28 (97 aa).

It belongs to the bacterial ribosomal protein bL28 family.

The chain is Large ribosomal subunit protein bL28 from Brucella ovis (strain ATCC 25840 / 63/290 / NCTC 10512).